Here is a 133-residue protein sequence, read N- to C-terminus: Small ribosomal subunit protein uS8 (133 aa).

It belongs to the universal ribosomal protein uS8 family. As to quaternary structure, part of the 30S ribosomal subunit. Contacts proteins S5 and S12.

One of the primary rRNA binding proteins, it binds directly to 16S rRNA central domain where it helps coordinate assembly of the platform of the 30S subunit. In Oenococcus oeni (strain ATCC BAA-331 / PSU-1), this protein is Small ribosomal subunit protein uS8.